The following is a 233-amino-acid chain: Large ribosomal subunit protein uL1 (233 aa).

Belongs to the universal ribosomal protein uL1 family. As to quaternary structure, part of the 50S ribosomal subunit.

Binds directly to 23S rRNA. The L1 stalk is quite mobile in the ribosome, and is involved in E site tRNA release. Its function is as follows. Protein L1 is also a translational repressor protein, it controls the translation of the L11 operon by binding to its mRNA. In Shewanella amazonensis (strain ATCC BAA-1098 / SB2B), this protein is Large ribosomal subunit protein uL1.